The following is a 209-amino-acid chain: MQFVAFERAKQGTGASRRLRNSGKAPGIVYGGAAEAQLIEIDHNALWHALKKEVFHSSILDMEVNGQTSKVVLRDVQFHPYKQLILHVDFQRVDDKTKVHLKVPLHFEGMEQSQAVKVENCTITPLVHELDVVCMPAQLPEFITVDLSGLTSKSTLGLQGLKLPNGVKAVVRGSNKNPALISIKLPEVAPDASAAPVAAPAAPAKKGKK.

Residues 190–209 (PDASAAPVAAPAAPAKKGKK) are disordered.

This sequence belongs to the bacterial ribosomal protein bL25 family. CTC subfamily. Part of the 50S ribosomal subunit; part of the 5S rRNA/L5/L18/L25 subcomplex. Contacts the 5S rRNA. Binds to the 5S rRNA independently of L5 and L18.

Its function is as follows. This is one of the proteins that binds to the 5S RNA in the ribosome where it forms part of the central protuberance. In Delftia acidovorans (strain DSM 14801 / SPH-1), this protein is Large ribosomal subunit protein bL25.